The chain runs to 262 residues: 3-methyl-2-oxobutanoate hydroxymethyltransferase (262 aa).

Aspartate 31 and aspartate 70 together coordinate Mg(2+). Residues 31–32 (DS), aspartate 70, and lysine 99 contribute to the 3-methyl-2-oxobutanoate site. Glutamate 101 serves as a coordination point for Mg(2+). Catalysis depends on glutamate 168, which acts as the Proton acceptor.

This sequence belongs to the PanB family. Homodecamer; pentamer of dimers. It depends on Mg(2+) as a cofactor.

The protein localises to the cytoplasm. It carries out the reaction 3-methyl-2-oxobutanoate + (6R)-5,10-methylene-5,6,7,8-tetrahydrofolate + H2O = 2-dehydropantoate + (6S)-5,6,7,8-tetrahydrofolate. It functions in the pathway cofactor biosynthesis; coenzyme A biosynthesis. Catalyzes the reversible reaction in which hydroxymethyl group from 5,10-methylenetetrahydrofolate is transferred onto alpha-ketoisovalerate to form ketopantoate. The polypeptide is 3-methyl-2-oxobutanoate hydroxymethyltransferase (Cenarchaeum symbiosum (strain A)).